The sequence spans 132 residues: Hydrogenase maturation factor HypA (132 aa).

His2 is a binding site for Ni(2+). The Zn(2+) site is built by Cys74, Cys77, Cys91, and Cys94.

The protein belongs to the HypA/HybF family.

In terms of biological role, involved in the maturation of [NiFe] hydrogenases. Required for nickel insertion into the metal center of the hydrogenase. The sequence is that of Hydrogenase maturation factor HypA from Synechococcus sp. (strain JA-2-3B'a(2-13)) (Cyanobacteria bacterium Yellowstone B-Prime).